We begin with the raw amino-acid sequence, 534 residues long: ATP synthase subunit alpha 2 (534 aa).

175–182 (GDRQTGKT) is an ATP binding site. The interval 506–534 (FQPAPEPETAPKTKTDIKPKPKAAGGESS) is disordered. Over residues 514-524 (TAPKTKTDIKP) the composition is skewed to basic and acidic residues.

It belongs to the ATPase alpha/beta chains family. As to quaternary structure, F-type ATPases have 2 components, CF(1) - the catalytic core - and CF(0) - the membrane proton channel. CF(1) has five subunits: alpha(3), beta(3), gamma(1), delta(1), epsilon(1). CF(0) has three main subunits: a(1), b(2) and c(9-12). The alpha and beta chains form an alternating ring which encloses part of the gamma chain. CF(1) is attached to CF(0) by a central stalk formed by the gamma and epsilon chains, while a peripheral stalk is formed by the delta and b chains.

The protein localises to the cell inner membrane. The enzyme catalyses ATP + H2O + 4 H(+)(in) = ADP + phosphate + 5 H(+)(out). In terms of biological role, produces ATP from ADP in the presence of a proton gradient across the membrane. The alpha chain is a regulatory subunit. This chain is ATP synthase subunit alpha 2, found in Albidiferax ferrireducens (strain ATCC BAA-621 / DSM 15236 / T118) (Rhodoferax ferrireducens).